Here is a 59-residue protein sequence, read N- to C-terminus: Mu-conotoxin SrVA (59 aa).

An N-terminal signal peptide occupies residues 1–22 (MRCLPVFVILLLLIASAPSVDA). A propeptide spanning residues 23-44 (QLKTKDDVPLASFHDNAKGTQH) is cleaved from the precursor. 2 cysteine pairs are disulfide-bonded: Cys51-Cys58 and Cys52-Cys59.

Belongs to the conotoxin T superfamily. As to expression, expressed by the venom duct.

It localises to the secreted. Its function is as follows. Mu-conotoxins block voltage-gated sodium channels. This peptide inhibits the cardiac sodium channel hNav1.5/SCN5A (33% inhibition at 200 nM, 50% at 400 nM, and 55% at 600 nM). Does not interfere with the voltage-dependence of activation, but affects the voltage-dependence of inactivation of hNav1.5. In vivo, intracranial injection into 9-day-old mice causes transient symptoms, including extension of the body and clockwise and counter-clockwise turns, that last 3 to 4 minutes. Intracranial injection into 16-day-old mice, causes transient symptoms, including agitated breathing and occasional turning followed by scratching and grooming behavior, that last for 15-19 minutes. The sequence is that of Mu-conotoxin SrVA from Conus spurius (Alphabet cone).